The primary structure comprises 65 residues: Large ribosomal subunit protein uL29 (65 aa).

The protein belongs to the universal ribosomal protein uL29 family.

In Coxiella burnetii (strain CbuK_Q154) (Coxiella burnetii (strain Q154)), this protein is Large ribosomal subunit protein uL29.